Consider the following 495-residue polypeptide: Probable cobyric acid synthase (495 aa).

Residues 256–441 (DVDIAVIRLT…LHGLFDNVNI (186 aa)) enclose the GATase cobBQ-type domain. The active-site Nucleophile is the Cys334. Residue His433 is part of the active site.

Belongs to the CobB/CobQ family. CobQ subfamily.

Its pathway is cofactor biosynthesis; adenosylcobalamin biosynthesis. In terms of biological role, catalyzes amidations at positions B, D, E, and G on adenosylcobyrinic A,C-diamide. NH(2) groups are provided by glutamine, and one molecule of ATP is hydrogenolyzed for each amidation. The sequence is that of Probable cobyric acid synthase from Methanococcoides burtonii (strain DSM 6242 / NBRC 107633 / OCM 468 / ACE-M).